Consider the following 114-residue polypeptide: Large ribosomal subunit protein uL18 (114 aa).

The protein belongs to the universal ribosomal protein uL18 family. Part of the 50S ribosomal subunit; part of the 5S rRNA/L5/L18/L25 subcomplex. Contacts the 23S rRNA. Contacts protein L27 and the 5S rRNA.

Functionally, this is one of the proteins that bind and probably mediate the attachment of the 5S RNA into the large ribosomal subunit, where it forms part of the central protuberance. The chain is Large ribosomal subunit protein uL18 (rplR) from Deinococcus radiodurans (strain ATCC 13939 / DSM 20539 / JCM 16871 / CCUG 27074 / LMG 4051 / NBRC 15346 / NCIMB 9279 / VKM B-1422 / R1).